A 651-amino-acid polypeptide reads, in one-letter code: DNA mismatch repair protein MutL (651 aa).

The tract at residues arginine 336 to proline 398 is disordered. Residues alanine 385–glutamine 394 are compositionally biased toward polar residues.

This sequence belongs to the DNA mismatch repair MutL/HexB family.

In terms of biological role, this protein is involved in the repair of mismatches in DNA. It is required for dam-dependent methyl-directed DNA mismatch repair. May act as a 'molecular matchmaker', a protein that promotes the formation of a stable complex between two or more DNA-binding proteins in an ATP-dependent manner without itself being part of a final effector complex. The sequence is that of DNA mismatch repair protein MutL from Pectobacterium atrosepticum (strain SCRI 1043 / ATCC BAA-672) (Erwinia carotovora subsp. atroseptica).